Here is a 418-residue protein sequence, read N- to C-terminus: Actin-related protein 3B (418 aa).

This sequence belongs to the actin family. ARP3 subfamily. As to quaternary structure, interacts with the Arp2/3 complex composed of ARP2, ARP3, ARPC1B, ARPC1B/p41-ARC, ARPC2/p34-ARC, ARPC3/p21-ARC, ARPC4/p20-ARC and ARPC5/p16-ARC. In terms of tissue distribution, detected in fetal brain. Detected throughout the adult brain, in neurons from gray matter, but not in white matter. Detected in liver, skeletal muscle and pancreas. Detected in lung adenocarcinoma cells with low metastatic potential, but not in lung adenocarcinoma cells with high metastatic potential.

It is found in the cytoplasm. The protein resides in the cytoskeleton. The protein localises to the cell projection. Its function is as follows. Plays a role in the organization of the actin cytoskeleton. May function as ATP-binding component of the Arp2/3 complex which is involved in regulation of actin polymerization and together with an activating nucleation-promoting factor (NPF) mediates the formation of branched actin networks. May decrease the metastatic potential of tumors. In Homo sapiens (Human), this protein is Actin-related protein 3B (ACTR3B).